The primary structure comprises 1089 residues: PALM2-AKAP2 fusion protein (1089 aa).

Residues 70–107 (SEEDEFKVKQLEDNIQRLEQEIQALESEESQISAKEQI) adopt a coiled-coil conformation. 3 disordered regions span residues 165 to 194 (SEDA…SPDH), 210 to 231 (PGVT…PSHN), and 289 to 362 (PAHS…SRDG). Residues 173–183 (SKQDNCGDSRL) are compositionally biased toward basic and acidic residues. Phosphoserine occurs at positions 315 and 318. Basic and acidic residues predominate over residues 317 to 328 (PSDRMAEGERAN). The segment covering 329–347 (GHSTDQPQDLLGNSLQAPA) has biased composition (polar residues). The residue at position 348 (serine 348) is a Phosphoserine. A compositionally biased stretch (low complexity) spans 348–357 (SPSSSTSSHC). A Glycyl lysine isopeptide (Lys-Gly) (interchain with G-Cter in SUMO1); alternate cross-link involves residue lysine 370. Lysine 370 participates in a covalent cross-link: Glycyl lysine isopeptide (Lys-Gly) (interchain with G-Cter in SUMO2); alternate. Positions 429–517 (KNPGIAAKWW…LSTSQPCTAP (89 aa)) are disordered. The segment covering 455–470 (LESHRKYKERKEKRAQ) has biased composition (basic and acidic residues). Residues 471-508 (QEQLQLQQQQQQQLQQQQLQQQQLQQQQLQQQLQQQQL) show a composition bias toward low complexity. Serine 553 is modified (phosphoserine). The segment at 592–644 (TVGGTLEDGGTQAAKEQKAPCVSESQSAGAGPANAATQGKEGPYSEPSKRGPL) is disordered. Phosphoserine is present on residues serine 678, serine 682, and serine 734. Polar residues predominate over residues 712-749 (FSMDNISDSGASNETPSALQENSLADFSLPQTPQTDNP). 3 disordered regions span residues 712–783 (FSMD…DPLE), 800–899 (EQVD…YFSK), and 915–934 (TQES…KQRT). A Phosphothreonine modification is found at threonine 743. The interval 782-795 (LEYQAGLLVQNAIQ) is PKA-RII subunit binding domain. Residues 801-814 (QVDKAEAHTSKEGS) show a composition bias toward basic and acidic residues. Serine 847 carries the post-translational modification Phosphoserine. Basic and acidic residues predominate over residues 850 to 871 (QEKRDILPKNLPAEDRALREKG). A coiled-coil region spans residues 928 to 958 (RSRKQRTLSMIEEEIRAAQEREEELKRQRQV). Residues serine 936, serine 964, serine 995, and serine 1002 each carry the phosphoserine modification. The interval 946-1021 (QEREEELKRQ…AAGTQRPKNL (76 aa)) is disordered.

Highly expressed in lung and weakly in thymus and cerebellum. Little or no expression in liver, heart and cerebral cortex. All isoforms are expressed in lung, but KL2A and KL2B isoforms are the principal isoforms in cerebellum.

The protein resides in the apical cell membrane. Functionally, binds to regulatory subunit (RII) of protein kinase A. May be involved in establishing polarity in signaling systems or in integrating PKA-RII isoforms with downstream effectors to capture, amplify and focus diffuse, trans-cellular signals carried by cAMP. Binds tp and modulates the structure of the actin cytoskeleton. This is PALM2-AKAP2 fusion protein from Mus musculus (Mouse).